Here is a 584-residue protein sequence, read N- to C-terminus: ATP-dependent RNA helicase MRH4, mitochondrial (584 aa).

The N-terminal 49 residues, methionine 1–asparagine 49, are a transit peptide targeting the mitochondrion. Residues arginine 28 to arginine 39 show a composition bias toward polar residues. The interval arginine 28–glutamate 92 is disordered. Over residues glycine 63–proline 79 the composition is skewed to basic and acidic residues. The short motif at histidine 162–glutamine 169 is the Q motif element. Residues threonine 179–isoleucine 366 enclose the Helicase ATP-binding domain. Alanine 192 to threonine 199 serves as a coordination point for ATP. The DEAD box motif lies at aspartate 314–aspartate 317. Positions alanine 397–serine 584 constitute a Helicase C-terminal domain.

Belongs to the DEAD box helicase family. MRH4 subfamily.

The protein localises to the mitochondrion. It carries out the reaction ATP + H2O = ADP + phosphate + H(+). ATP-binding RNA helicase involved in mitochondrial RNA metabolism. Required for maintenance of mitochondrial DNA. This Kluyveromyces lactis (strain ATCC 8585 / CBS 2359 / DSM 70799 / NBRC 1267 / NRRL Y-1140 / WM37) (Yeast) protein is ATP-dependent RNA helicase MRH4, mitochondrial (MRH4).